The chain runs to 134 residues: Ribosome-binding factor A (134 aa).

This sequence belongs to the RbfA family. Monomer. Binds 30S ribosomal subunits, but not 50S ribosomal subunits or 70S ribosomes.

The protein resides in the cytoplasm. One of several proteins that assist in the late maturation steps of the functional core of the 30S ribosomal subunit. Associates with free 30S ribosomal subunits (but not with 30S subunits that are part of 70S ribosomes or polysomes). Required for efficient processing of 16S rRNA. May interact with the 5'-terminal helix region of 16S rRNA. In Tolumonas auensis (strain DSM 9187 / NBRC 110442 / TA 4), this protein is Ribosome-binding factor A.